A 434-amino-acid polypeptide reads, in one-letter code: V-type ATP synthase beta chain (434 aa).

This sequence belongs to the ATPase alpha/beta chains family.

In terms of biological role, produces ATP from ADP in the presence of a proton gradient across the membrane. The V-type beta chain is a regulatory subunit. This Borreliella burgdorferi (strain ATCC 35210 / DSM 4680 / CIP 102532 / B31) (Borrelia burgdorferi) protein is V-type ATP synthase beta chain (atpB).